The sequence spans 273 residues: Manganese catalase (273 aa).

Position 35 (Glu-35) interacts with Mn(2+). 2 residues coordinate Ca(2+): Asp-57 and Asp-61. Mn(2+) is bound by residues Glu-66, His-69, Glu-149, and His-182. Residues Asn-220, Ser-222, and Gly-224 each contribute to the Ca(2+) site. Residues 254–273 are disordered; sequence EKPELKPAPPCVHNTLPGRE.

It belongs to the manganese catalase family. As to quaternary structure, homohexamer. Ca(2+) is required as a cofactor. It depends on Mn(2+) as a cofactor.

The catalysed reaction is 2 H2O2 = O2 + 2 H2O. Inhibited in the presence of EDTA. Resistant to inhibition by sodium azide. Catalyzes the decomposition of hydrogen peroxide into water and oxygen. No significant activity could be detected with any of the other tested substrates, including glutathione, pyrogallol, NADH, NADPH and o-dianisidine. In Bacillus subtilis, this protein is Manganese catalase.